A 935-amino-acid chain; its full sequence is Pre-mRNA-splicing factor CWC22 homolog (935 aa).

The segment at 1-179 is disordered; sequence MSRSPSPDSP…PKDLLRTRTG (179 aa). 2 stretches are compositionally biased toward basic and acidic residues: residues 13-25 and 49-70; these read VRDDEEKDAREQS and ESSRKDSRESGKRRDSHEDEKM. Over residues 84–148 the composition is skewed to basic residues; sequence QHRRHRESRS…RSPARRRSPV (65 aa). Residues 159–175 show a composition bias toward basic and acidic residues; that stretch reads PTEEPEKKKNDPKDLLR. The region spanning 212-400 is the MIF4G domain; it reads KKKIHGLVNR…ETAMQIRKDK (189 aa). Residues 463–489 form a disordered region; it reads ADISSDEEEEVEDDDEESEAEEAPRKT. Residues 465-483 are compositionally biased toward acidic residues; that stretch reads ISSDEEEEVEDDDEESEAE. In terms of domain architecture, MI spans 502–633; the sequence is AFRREVYLTL…EWKILADVKM (132 aa). The tract at residues 725 to 935 is disordered; that stretch reads KAAQSSSDSS…VGSDDRRRRH (211 aa). Over residues 729 to 763 the composition is skewed to low complexity; the sequence is SSSDSSSDSSDSSDSSDSSGSSDSSDDSSSSSSSD. 2 stretches are compositionally biased toward basic and acidic residues: residues 780–891 and 897–935; these read KKKE…DRKE and DRRDHRDRSRSRERNEKRRHDDDRRREEKVGSDDRRRRH.

This sequence belongs to the CWC22 family.

Its subcellular location is the nucleus. The protein localises to the nucleus speckle. Required for early embryogenesis and tissue differentiation. Required for pre-mRNA splicing and for exon-junction complex (EJC) assembly. Hinders EIF4A3 from non-specifically binding RNA and escorts it to the splicing machinery to promote EJC assembly on mature mRNAs. Through its role in EJC assembly, required for nonsense-mediated mRNA decay. The chain is Pre-mRNA-splicing factor CWC22 homolog from Caenorhabditis briggsae.